We begin with the raw amino-acid sequence, 265 residues long: 4-hydroxy-tetrahydrodipicolinate reductase (265 aa).

Residues 9-14 (GALGRM), 100-102 (GTT), and 124-127 (SPNM) contribute to the NAD(+) site. His158 serves as the catalytic Proton donor/acceptor. Position 159 (His159) interacts with (S)-2,3,4,5-tetrahydrodipicolinate. Lys162 functions as the Proton donor in the catalytic mechanism. 168-169 (GT) contributes to the (S)-2,3,4,5-tetrahydrodipicolinate binding site.

It belongs to the DapB family.

The protein localises to the cytoplasm. It carries out the reaction (S)-2,3,4,5-tetrahydrodipicolinate + NAD(+) + H2O = (2S,4S)-4-hydroxy-2,3,4,5-tetrahydrodipicolinate + NADH + H(+). The enzyme catalyses (S)-2,3,4,5-tetrahydrodipicolinate + NADP(+) + H2O = (2S,4S)-4-hydroxy-2,3,4,5-tetrahydrodipicolinate + NADPH + H(+). It functions in the pathway amino-acid biosynthesis; L-lysine biosynthesis via DAP pathway; (S)-tetrahydrodipicolinate from L-aspartate: step 4/4. Its function is as follows. Catalyzes the conversion of 4-hydroxy-tetrahydrodipicolinate (HTPA) to tetrahydrodipicolinate. This is 4-hydroxy-tetrahydrodipicolinate reductase from Aquifex aeolicus (strain VF5).